Reading from the N-terminus, the 238-residue chain is Ribonuclease PH (238 aa).

Phosphate is bound by residues R86 and G124–R126.

It belongs to the RNase PH family. As to quaternary structure, homohexameric ring arranged as a trimer of dimers.

It carries out the reaction tRNA(n+1) + phosphate = tRNA(n) + a ribonucleoside 5'-diphosphate. Functionally, phosphorolytic 3'-5' exoribonuclease that plays an important role in tRNA 3'-end maturation. Removes nucleotide residues following the 3'-CCA terminus of tRNAs; can also add nucleotides to the ends of RNA molecules by using nucleoside diphosphates as substrates, but this may not be physiologically important. Probably plays a role in initiation of 16S rRNA degradation (leading to ribosome degradation) during starvation. This is Ribonuclease PH from Erwinia tasmaniensis (strain DSM 17950 / CFBP 7177 / CIP 109463 / NCPPB 4357 / Et1/99).